Here is a 174-residue protein sequence, read N- to C-terminus: RNA pyrophosphohydrolase (174 aa).

The Nudix hydrolase domain maps to 6–145; sequence GYRPNVGMII…KRRVYWQALQ (140 aa). Positions 38–59 match the Nudix box motif; sequence GGIDYAETPEQAMFRELEEEVG.

This sequence belongs to the Nudix hydrolase family. RppH subfamily. A divalent metal cation serves as cofactor.

Accelerates the degradation of transcripts by removing pyrophosphate from the 5'-end of triphosphorylated RNA, leading to a more labile monophosphorylated state that can stimulate subsequent ribonuclease cleavage. The chain is RNA pyrophosphohydrolase from Acidithiobacillus ferrooxidans (strain ATCC 53993 / BNL-5-31) (Leptospirillum ferrooxidans (ATCC 53993)).